The chain runs to 287 residues: Iodotyrosine deiodinase (287 aa).

A helical transmembrane segment spans residues histidine 15–phenylalanine 34. Residues arginine 96–arginine 100, serine 125, and serine 125–glycine 126 each bind FMN. Alanine 127, glutamate 154, tyrosine 158, and lysine 179 together coordinate 3,5-diiodo-L-tyrosine. 3-iodo-L-tyrosine-binding residues include alanine 127, glutamate 154, tyrosine 158, and lysine 179. Residues valine 235–threonine 237 and arginine 277 contribute to the FMN site.

It belongs to the nitroreductase family. In terms of assembly, homodimer. FMN is required as a cofactor. Expressed in spermatocytes.

It localises to the cell membrane. It carries out the reaction 2 iodide + L-tyrosine + 2 NADP(+) = 3,5-diiodo-L-tyrosine + 2 NADPH + H(+). The catalysed reaction is iodide + L-tyrosine + NADP(+) = 3-iodo-L-tyrosine + NADPH. It catalyses the reaction 3-iodo-L-tyrosine + iodide + NADP(+) = 3,5-diiodo-L-tyrosine + NADPH + H(+). The enzyme catalyses L-tyrosine + chloride + NADP(+) = 3-chloro-L-tyrosine + NADPH. It carries out the reaction bromide + L-tyrosine + NADP(+) = 3-bromo-L-tyrosine + NADPH. Its function is as follows. Catalyzes the dehalogenation of halotyrosines such as 3-bromo-L-tyrosine, 3-chloro-L-tyrosine, 3-iodo-L-tyrosine and 3,5-diiodo-L-tyrosine. Activity towards 3-fluoro-L-tyrosine is weak. Important for male and female fertility. May be involved in maintaining the viability of sperm, both during development in the testes and storage in the female spermatheca. The chain is Iodotyrosine deiodinase from Drosophila melanogaster (Fruit fly).